The following is a 979-amino-acid chain: Receptor-type tyrosine-protein phosphatase-like N (979 aa).

Positions 1–34 (MRRPRRPGGLGGSGGLRLLLCLLLLSSRPGGCSA) are cleaved as a signal peptide. The segment at 35–131 (VSAHGCLFDR…RPRDRSGLAP (97 aa)) is RESP18 homology domain. At 35-575 (VSAHGCLFDR…QTAHSTSPMR (541 aa)) the chain is on the lumenal side. Cysteine 53 and cysteine 62 are oxidised to a cystine. Composition is skewed to basic and acidic residues over residues 112–127 (RIPR…RDRS) and 304–323 (RAED…RGEK). Disordered stretches follow at residues 112 to 173 (RIPR…SSSL), 289 to 329 (SRAR…SPAV), and 393 to 439 (VEGR…ARPP). Residue serine 308 is modified to Phosphoserine. Positions 415–433 (SPTSSEVQQVPSPVSSEPP) are enriched in low complexity. O-linked (GalNAc...) threonine glycosylation is present at threonine 441. The tract at residues 449–575 (SPLGQSQPTV…QTAHSTSPMR (127 aa)) is sufficient for dimerization of proICA512. N-linked (GlcNAc...) asparagine glycosylation is found at asparagine 506 and asparagine 524. A helical membrane pass occupies residues 576–600 (SVLLTLVALAGVAGLLVALAVALCV). Residues 601–732 (RQHARQQDKE…PNTCATAQGE (132 aa)) form a sufficient for dimerization of proICA512 region. The Cytoplasmic portion of the chain corresponds to 601 to 979 (RQHARQQDKE…VNAILKALPQ (379 aa)). A disordered region spans residues 643-680 (NRAEGPPEPSRVSSVSSQFSDAAQASPSSHSSTPSWCE). The span at 652 to 677 (SRVSSVSSQFSDAAQASPSSHSSTPS) shows a compositional bias: low complexity. A Tyrosine-protein phosphatase domain is found at 709 to 969 (LAKEWQALCA…EFALTAVAEE (261 aa)). Residue lysine 754 forms a Glycyl lysine isopeptide (Lys-Gly) (interchain with G-Cter in SUMO) linkage.

The protein belongs to the protein-tyrosine phosphatase family. Receptor class 8 subfamily. As to quaternary structure, homodimer; shown for the unprocessed protein (proICA512) in the endoplasmic reticulum and resolved during protein maturation as ICA512-TMF seems to be predominantly monomeric in secretory granules; however, ICA512-CCF interacts with ICA512-TMF disrupting the ICA512-TMF:SNTB2 complex. The isolated lumenal RESP18 homology domain has been shown to form disulfide-linked homooligomers. Interacts (via cytoplasmic domain) with phosphorylated SNTB2; this protects PTPRN against cleavage by CAPN1 to produce ICA512-CCF. Dephosphorylation of SNTB2 upon insulin stimulation disrupts the interaction and results in PTPRN cleavage. Interacts with SNX19. ICA512-CCF interacts with PIAS4; in the nucleus. Interacts with STAT5B (phosphorylated); down-regulated by ICA512-CCF sumoylation; ICA512-CCF prevents STAT5B dephosphorylation; ICA512-CCF mediates interaction of STAT5B with PIAS4. Interacts (via RESP18 homology domain) with insulin and proinsulin. Interacts with PTPRN2, PTPRA and PTPRE. In terms of processing, N-glycosylated. Post-translationally, O-glycosylated with core 1 or possibly core 8 glycans. Subject to proteolytic cleavage at multiple sites. Subject to cleavage on a pair of basic residues. On exocytosis of secretory granules in pancreatic beta-cells ICA512-TMF is transiently inserted in the plasma-membrane and cleaved by mu-type calpain CPN1 to yield ICA512-CCF. In terms of processing, sumoylated at two sites including Lys-754. Sumoylation decreases interaction with STAT5. In terms of tissue distribution, expression is restricted to neuroendocrine cells. Found in pancreas, brain and pituitary.

The protein resides in the membrane. Its subcellular location is the cytoplasmic vesicle. The protein localises to the secretory vesicle membrane. It is found in the perikaryon. It localises to the cell projection. The protein resides in the axon. Its subcellular location is the synapse. The protein localises to the cell membrane. It is found in the endosome. It localises to the nucleus. Plays a role in vesicle-mediated secretory processes. Required for normal accumulation of secretory vesicles in hippocampus, pituitary and pancreatic islets. Required for the accumulation of normal levels of insulin-containing vesicles and preventing their degradation. Plays a role in insulin secretion in response to glucose stimuli. Required for normal accumulation of the neurotransmitters norepinephrine, dopamine and serotonin in the brain. In females, but not in males, required for normal accumulation and secretion of pituitary hormones, such as luteinizing hormone (LH) and follicle-stimulating hormone (FSH). Required to maintain normal levels of renin expression and renin release. Seems to lack intrinsic enzyme activity. May regulate catalytic active protein-tyrosine phosphatases such as PTPRA through dimerization. Its function is as follows. ICA512-TMF regulates dynamics and exocytosis of insulin secretory granules (SGs); binding of ICA512-TMF to SNTB2/beta-2-syntrophin is proposed to restrain SGs mobility and exocytosis by tethering them to the actin cytoskeleton depending on UTRN; the function is inhibited by cytoplasmic ICA512-CFF dimerizing with ICA512-TMF and displacing SNTB2. In terms of biological role, ICA512-CCF translocated to the nucleus promotes expression of insulin and other granule-related genes; the function implicates binding to and regulating activity of STAT5B probably by preventing its dephosphorylation and potentially by inducing its sumoylation by recruiting PIAS4. Enhances pancreatic beta-cell proliferation by converging with signaling by STAT5B and STAT3. ICA512-CCF located in the cytoplasm regulates dynamics and exocytosis of insulin secretory granules (SGs) by dimerizing with ICA512-TMF and displacing SNTB2 thus enhancing SGs mobility and exocytosis. The protein is Receptor-type tyrosine-protein phosphatase-like N (PTPRN) of Homo sapiens (Human).